The following is a 124-amino-acid chain: Acidic phospholipase A2 BA1 (124 aa).

Disulfide bonds link cysteine 26–cysteine 116, cysteine 28–cysteine 44, cysteine 43–cysteine 95, cysteine 49–cysteine 124, cysteine 50–cysteine 88, cysteine 57–cysteine 81, and cysteine 75–cysteine 86. Tyrosine 27, glycine 29, and glycine 31 together coordinate Ca(2+). Histidine 47 is an active-site residue. Aspartate 48 is a binding site for Ca(2+). The active site involves aspartate 89.

Belongs to the phospholipase A2 family. Group II subfamily. D49 sub-subfamily. Requires Ca(2+) as cofactor. As to expression, expressed by the venom gland.

It localises to the secreted. The enzyme catalyses a 1,2-diacyl-sn-glycero-3-phosphocholine + H2O = a 1-acyl-sn-glycero-3-phosphocholine + a fatty acid + H(+). Its function is as follows. PLA2 catalyzes the calcium-dependent hydrolysis of the 2-acyl groups in 3-sn-phosphoglycerides. In Gloydius halys (Chinese water mocassin), this protein is Acidic phospholipase A2 BA1.